The sequence spans 382 residues: Alkanesulfonate monooxygenase (382 aa).

The protein belongs to the SsuD family.

It catalyses the reaction an alkanesulfonate + FMNH2 + O2 = an aldehyde + FMN + sulfite + H2O + 2 H(+). Its function is as follows. Catalyzes the desulfonation of aliphatic sulfonates. The sequence is that of Alkanesulfonate monooxygenase from Pseudomonas putida (strain W619).